Here is a 362-residue protein sequence, read N- to C-terminus: Heat-inducible transcription repressor HrcA (362 aa).

It belongs to the HrcA family.

Negative regulator of class I heat shock genes (grpE-dnaK-dnaJ and groELS operons). Prevents heat-shock induction of these operons. This Bradyrhizobium sp. (strain BTAi1 / ATCC BAA-1182) protein is Heat-inducible transcription repressor HrcA.